Here is a 276-residue protein sequence, read N- to C-terminus: Phosphatidylglycerol--prolipoprotein diacylglyceryl transferase (276 aa).

Helical transmembrane passes span 17–37, 63–83, and 95–115; these read LAIH…FFLA, ILFL…CLFY, and ILAV…VLAS. Residue R146 coordinates a 1,2-diacyl-sn-glycero-3-phospho-(1'-sn-glycerol). Transmembrane regions (helical) follow at residues 182–202, 209–229, and 235–255; these read SQVY…WLYA, GQVS…AEYF, and FLGI…PMIV.

The protein belongs to the Lgt family.

The protein resides in the cell inner membrane. The catalysed reaction is L-cysteinyl-[prolipoprotein] + a 1,2-diacyl-sn-glycero-3-phospho-(1'-sn-glycerol) = an S-1,2-diacyl-sn-glyceryl-L-cysteinyl-[prolipoprotein] + sn-glycerol 1-phosphate + H(+). It functions in the pathway protein modification; lipoprotein biosynthesis (diacylglyceryl transfer). In terms of biological role, catalyzes the transfer of the diacylglyceryl group from phosphatidylglycerol to the sulfhydryl group of the N-terminal cysteine of a prolipoprotein, the first step in the formation of mature lipoproteins. This chain is Phosphatidylglycerol--prolipoprotein diacylglyceryl transferase, found in Polaromonas sp. (strain JS666 / ATCC BAA-500).